A 412-amino-acid polypeptide reads, in one-letter code: Argininosuccinate synthase (412 aa).

Residues 12 to 20 (AYSGGLDTS) and alanine 39 each bind ATP. Tyrosine 91 and serine 96 together coordinate L-citrulline. ATP is bound at residue glycine 121. Positions 123, 127, and 128 each coordinate L-aspartate. Position 127 (asparagine 127) interacts with L-citrulline. L-citrulline contacts are provided by arginine 131, serine 180, serine 189, glutamate 265, and tyrosine 277.

It belongs to the argininosuccinate synthase family. Type 1 subfamily. Homotetramer.

The protein resides in the cytoplasm. It carries out the reaction L-citrulline + L-aspartate + ATP = 2-(N(omega)-L-arginino)succinate + AMP + diphosphate + H(+). It participates in amino-acid biosynthesis; L-arginine biosynthesis; L-arginine from L-ornithine and carbamoyl phosphate: step 2/3. The protein is Argininosuccinate synthase of Pseudoalteromonas atlantica (strain T6c / ATCC BAA-1087).